Reading from the N-terminus, the 350-residue chain is Derriere protein (350 aa).

The N-terminal stretch at 1–16 is a signal peptide; it reads MLSLACFFSFLLMVKS. A propeptide spanning residues 17–236 is cleaved from the precursor; that stretch reads SPLTFQERML…SSCKTPRAKR (220 aa). Residues Asn-171 and Asn-202 are each glycosylated (N-linked (GlcNAc...) asparagine). Disulfide bonds link Cys-249/Cys-315, Cys-278/Cys-347, and Cys-282/Cys-349.

Belongs to the TGF-beta family. In terms of assembly, homodimer; disulfide-linked. Also forms heterodimers with other TGF-beta family members including nodal2/nr-2 and bmp4.

The protein localises to the secreted. Its function is as follows. Required for posterior mesoderm formation during embryogenesis. Acts indirectly to suppress head formation by altering mesodermal patterning. Also involved in the establishment of left-right axis asymmetry, acting upstream of nodal/nr-1. Can exert long-range effects in the embryo. The protein is Derriere protein of Xenopus tropicalis (Western clawed frog).